Here is a 398-residue protein sequence, read N- to C-terminus: Dual-specificity RNA methyltransferase RlmN (398 aa).

The Proton acceptor role is filled by E119. Residues 125-364 (EGDRATLCVS…TIVRKTRGDD (240 aa)) form the Radical SAM core domain. The cysteines at positions 132 and 369 are disulfide-linked. Residues C139, C143, and C146 each contribute to the [4Fe-4S] cluster site. Residues 193–194 (GE), S225, 247–249 (SLH), and N326 each bind S-adenosyl-L-methionine. Residue C369 is the S-methylcysteine intermediate of the active site.

It belongs to the radical SAM superfamily. RlmN family. Requires [4Fe-4S] cluster as cofactor.

It is found in the cytoplasm. It carries out the reaction adenosine(2503) in 23S rRNA + 2 reduced [2Fe-2S]-[ferredoxin] + 2 S-adenosyl-L-methionine = 2-methyladenosine(2503) in 23S rRNA + 5'-deoxyadenosine + L-methionine + 2 oxidized [2Fe-2S]-[ferredoxin] + S-adenosyl-L-homocysteine. It catalyses the reaction adenosine(37) in tRNA + 2 reduced [2Fe-2S]-[ferredoxin] + 2 S-adenosyl-L-methionine = 2-methyladenosine(37) in tRNA + 5'-deoxyadenosine + L-methionine + 2 oxidized [2Fe-2S]-[ferredoxin] + S-adenosyl-L-homocysteine. Specifically methylates position 2 of adenine 2503 in 23S rRNA and position 2 of adenine 37 in tRNAs. m2A2503 modification seems to play a crucial role in the proofreading step occurring at the peptidyl transferase center and thus would serve to optimize ribosomal fidelity. This is Dual-specificity RNA methyltransferase RlmN from Yersinia enterocolitica serotype O:8 / biotype 1B (strain NCTC 13174 / 8081).